Reading from the N-terminus, the 486-residue chain is Citrate synthase 3, mitochondrial (486 aa).

Residues 1 to 23 (MVQRLLPGAHICRRSFNSSAIIK) constitute a mitochondrion transit peptide. Catalysis depends on residues histidine 315, histidine 361, and aspartate 419. Residues 484 to 486 (NKL) carry the Microbody targeting signal motif.

Belongs to the citrate synthase family.

It is found in the mitochondrion. The enzyme catalyses oxaloacetate + acetyl-CoA + H2O = citrate + CoA + H(+). It participates in carbohydrate metabolism; tricarboxylic acid cycle; isocitrate from oxaloacetate: step 1/2. Functionally, dual specificity mitochondrial citrate and methylcitrate synthase with similar catalytic efficiency with both acetyl-CoA and propionyl-CoA. The polypeptide is Citrate synthase 3, mitochondrial (Saccharomyces cerevisiae (strain ATCC 204508 / S288c) (Baker's yeast)).